We begin with the raw amino-acid sequence, 527 residues long: Sensory neuron membrane protein 1 (527 aa).

Residues 1 to 10 (MQLQKPLKIG) are Cytoplasmic-facing. A helical transmembrane segment spans residues 11–31 (LGMMGAGLFGIIFGWVLFPVI). The Extracellular segment spans residues 32 to 456 (LKSQLKKEMA…LKNQLFIPKR (425 aa)). Residues asparagine 67 and asparagine 229 are each glycosylated (N-linked (GlcNAc...) asparagine). Disulfide bonds link cysteine 268–cysteine 333, cysteine 297–cysteine 352, and cysteine 335–cysteine 341. N-linked (GlcNAc...) asparagine glycosylation occurs at asparagine 440. Residues 457–477 (IVSVVKWLLAGVGFVGLVGSL) form a helical membrane-spanning segment. The Cytoplasmic portion of the chain corresponds to 478–527 (VYQFKGKMINFALSPSSAQVTKVNPEINQQNQPKDISIIGESQNPPKVDM).

The protein belongs to the CD36 family. Detected in both male and female antennal tissues. Expression is two to three fold higher in male compared to female antenna.

It is found in the cell membrane. In terms of biological role, plays an olfactory role that is not restricted to pheromone sensitivity. This chain is Sensory neuron membrane protein 1, found in Ostrinia furnacalis (Asian corn borer).